Here is a 253-residue protein sequence, read N- to C-terminus: Imidazole glycerol phosphate synthase subunit HisF (253 aa).

Catalysis depends on residues Asp-13 and Asp-132.

This sequence belongs to the HisA/HisF family. As to quaternary structure, heterodimer of HisH and HisF.

It localises to the cytoplasm. It catalyses the reaction 5-[(5-phospho-1-deoxy-D-ribulos-1-ylimino)methylamino]-1-(5-phospho-beta-D-ribosyl)imidazole-4-carboxamide + L-glutamine = D-erythro-1-(imidazol-4-yl)glycerol 3-phosphate + 5-amino-1-(5-phospho-beta-D-ribosyl)imidazole-4-carboxamide + L-glutamate + H(+). It functions in the pathway amino-acid biosynthesis; L-histidine biosynthesis; L-histidine from 5-phospho-alpha-D-ribose 1-diphosphate: step 5/9. IGPS catalyzes the conversion of PRFAR and glutamine to IGP, AICAR and glutamate. The HisF subunit catalyzes the cyclization activity that produces IGP and AICAR from PRFAR using the ammonia provided by the HisH subunit. The protein is Imidazole glycerol phosphate synthase subunit HisF of Aliarcobacter butzleri (strain RM4018) (Arcobacter butzleri).